The following is a 98-amino-acid chain: Probable sodium channel toxin Ts27 (98 aa).

Positions 1-22 (MYNMVSLFIVAVLLLTYANVEG) are cleaved as a signal peptide. 4 cysteine pairs are disulfide-bonded: C36/C88, C40/C63, C49/C68, and C53/C70.

The protein belongs to the long (4 C-C) scorpion toxin superfamily. Sodium channel inhibitor family. In terms of tissue distribution, expressed by the venom gland.

Its subcellular location is the secreted. Probable sodium channel toxin. This is Probable sodium channel toxin Ts27 from Tityus serrulatus (Brazilian scorpion).